The sequence spans 183 residues: Transmembrane and coiled-coil domain-containing protein 2 (183 aa).

A helical transmembrane segment spans residues 54–74 (VQIILGISFLTLLAIGLFALW). Residues 127–150 (GLQEKILKKLQMVENKVRDLEGII) are a coiled coil.

The protein resides in the membrane. This chain is Transmembrane and coiled-coil domain-containing protein 2 (Tmco2), found in Mus musculus (Mouse).